The primary structure comprises 356 residues: UDP-3-O-acylglucosamine N-acyltransferase (356 aa).

Catalysis depends on His-251, which acts as the Proton acceptor.

This sequence belongs to the transferase hexapeptide repeat family. LpxD subfamily. Homotrimer.

The catalysed reaction is a UDP-3-O-[(3R)-3-hydroxyacyl]-alpha-D-glucosamine + a (3R)-hydroxyacyl-[ACP] = a UDP-2-N,3-O-bis[(3R)-3-hydroxyacyl]-alpha-D-glucosamine + holo-[ACP] + H(+). Its pathway is bacterial outer membrane biogenesis; LPS lipid A biosynthesis. Catalyzes the N-acylation of UDP-3-O-acylglucosamine using 3-hydroxyacyl-ACP as the acyl donor. Is involved in the biosynthesis of lipid A, a phosphorylated glycolipid that anchors the lipopolysaccharide to the outer membrane of the cell. The protein is UDP-3-O-acylglucosamine N-acyltransferase of Ralstonia nicotianae (strain ATCC BAA-1114 / GMI1000) (Ralstonia solanacearum).